The primary structure comprises 153 residues: Subtilisin propeptide-like protein (153 aa).

Residues Met1–Ser27 form the signal peptide. The tract at residues Gln127–Leu153 is dispensable for parasite growth in host erythrocytes.

The protein localises to the secreted. It is found in the parasitophorous vacuole lumen. It localises to the cell membrane. In terms of biological role, acts as a specific inhibitor of subtilisin-like protease SUB1. This chain is Subtilisin propeptide-like protein, found in Plasmodium falciparum (isolate 3D7).